The chain runs to 517 residues: L-amino-acid oxidase (517 aa).

The first 18 residues, 1–18 (MNVFFMFSLLFLAALESC), serve as a signal peptide directing secretion. Cysteines 29 and 192 form a disulfide. Residues 62–63 (MA), 82–83 (EA), Arg90, and 106–109 (GPMR) each bind FAD. Arg109 provides a ligand contact to substrate. The N-linked (GlcNAc...) asparagine glycan is linked to Asn191. Val280 contributes to the FAD binding site. A disulfide bridge links Cys350 with Cys431. Substrate is bound at residue Tyr391. FAD-binding positions include Glu476 and 483-488 (GWIDST). 483-484 (GW) contacts substrate.

It belongs to the flavin monoamine oxidase family. FIG1 subfamily. As to quaternary structure, homodimer; non-covalently linked. It depends on FAD as a cofactor. Post-translationally, N-glycosylated. As to expression, expressed by the venom gland.

Its subcellular location is the secreted. The catalysed reaction is an L-alpha-amino acid + O2 + H2O = a 2-oxocarboxylate + H2O2 + NH4(+). Catalyzes an oxidative deamination of predominantly hydrophobic and aromatic L-amino acids, thus producing hydrogen peroxide that may contribute to the diverse toxic effects of this enzyme. Exhibits diverse biological activities, such as hemorrhage, hemolysis, edema, apoptosis of vascular endothelial cells or tumor cell lines, antibacterial and antiparasitic activities, as well as regulation of platelet aggregation. Its effect on platelets is controversial, since it either induces aggregation or inhibits agonist-induced aggregation. These different effects are probably due to different experimental conditions. In Demansia vestigiata (Lesser black whip snake), this protein is L-amino-acid oxidase.